We begin with the raw amino-acid sequence, 312 residues long: Acetylglutamate kinase (312 aa).

Substrate contacts are provided by residues 69 to 70, Arg91, and Asn191; that span reads GG.

Belongs to the acetylglutamate kinase family. ArgB subfamily.

It is found in the cytoplasm. It carries out the reaction N-acetyl-L-glutamate + ATP = N-acetyl-L-glutamyl 5-phosphate + ADP. It functions in the pathway amino-acid biosynthesis; L-arginine biosynthesis; N(2)-acetyl-L-ornithine from L-glutamate: step 2/4. Catalyzes the ATP-dependent phosphorylation of N-acetyl-L-glutamate. The chain is Acetylglutamate kinase from Streptomyces griseus subsp. griseus (strain JCM 4626 / CBS 651.72 / NBRC 13350 / KCC S-0626 / ISP 5235).